Reading from the N-terminus, the 989-residue chain is ATP-dependent 6-phosphofructokinase subunit alpha (989 aa).

The segment at 1 to 585 is N-terminal catalytic PFK domain 1; that stretch reads MPEPSISDLS…SYENFLSVSK (585 aa). ATP is bound by residues Gly-220, 283–284, and 313–316; these read RC and GDGS. Residue Asp-314 coordinates Mg(2+). Beta-D-fructose 6-phosphate contacts are provided by residues 359 to 361, Arg-396, 403 to 405, Glu-460, Arg-487, and 493 to 496; these read SID, MGR, and HVQR. The active-site Proton acceptor is the Asp-361. Residues 586 to 599 are interdomain linker; sequence YDDGSYLVPESSRL. The tract at residues 600–989 is C-terminal regulatory PFK domain 2; the sequence is NIAIIHVGAP…LSGRLSIRTT (390 aa). Residues Arg-670, 727 to 731, Arg-765, 772 to 774, Glu-832, Arg-858, 864 to 867, and Arg-963 each bind beta-D-fructose 2,6-bisphosphate; these read TVSNN, QGG, and HVQQ.

This sequence belongs to the phosphofructokinase type A (PFKA) family. ATP-dependent PFK group I subfamily. Eukaryotic two domain clade 'E' sub-subfamily. Heterododecamer of 4 alpha, 4 beta and 4 gamma chains. Requires Mg(2+) as cofactor.

It is found in the cytoplasm. The catalysed reaction is beta-D-fructose 6-phosphate + ATP = beta-D-fructose 1,6-bisphosphate + ADP + H(+). It participates in carbohydrate degradation; glycolysis; D-glyceraldehyde 3-phosphate and glycerone phosphate from D-glucose: step 3/4. Allosterically activated by ADP, AMP, or fructose 2,6-bisphosphate, and allosterically inhibited by ATP or citrate. Catalyzes the phosphorylation of D-fructose 6-phosphate to fructose 1,6-bisphosphate by ATP, the first committing step of glycolysis. This is ATP-dependent 6-phosphofructokinase subunit alpha (PFK1) from Komagataella pastoris (Yeast).